The sequence spans 464 residues: Argininosuccinate lyase (464 aa).

Belongs to the lyase 1 family. Argininosuccinate lyase subfamily.

It localises to the cytoplasm. It catalyses the reaction 2-(N(omega)-L-arginino)succinate = fumarate + L-arginine. It participates in amino-acid biosynthesis; L-arginine biosynthesis; L-arginine from L-ornithine and carbamoyl phosphate: step 3/3. Its activity is regulated as follows. Strongly inhibited by L-arginine. Inhibitory effects are lowered at pH 7.0 compared to those at pH 8.0. At 37 degrees Celsius and pH 7.5, activity decreases to 73% and 31% in the presence of 1 mM and 10 mM arginine, respectively. Activity also decreases to 84%, 93%, 82% and 85% in the presence of 10 mM sodium citrate, citrulline, asparatate and glutamate, respectively. Activity decreases to 96% in presence of 1 mM L-lysine. In terms of biological role, catalyzes the last step of arginine biosynthesis, the conversion of argininosuccinate into L-arginine and fumarate. This is Argininosuccinate lyase from Arthrospira platensis (strain NIES-39 / UTEX 3086 / IAM M-135) (Spirulina platensis).